The sequence spans 457 residues: MRGTLATALLLVISSRVATESNQLDPQQLSNHVVGTYDKIYTKSSPRRFLRGSRKQRDDLAPTAADENRTINNAIESAMHGITFSGGTTAATRNAAREVVDINAFSKRPRLSLNVPPSETSAHLIEAPTFPQRNSASTSTTSDIATSSSRTSNQRTPKTQASLDMSHKTMTRKSSSKNQFKKSTALKSTKRKVRARKIPAFVVNKVYTLYFDHVKTKSLGFDPTVKETKAMLSLYFESSVDPFYVSAVLSNFFRYFDDKELTIHKKKLGTTLTSALSTLAALELPPGMLKEIERPFVWYASLKRWRVMYCDFFEFVKVNSDKITNSLPNKEFYRGETSDIVRDKLLATLKKETNTNTRYKRKRKLKNDLDDVLKKYNVKEEIGAAIRDLGEQFLKADRQTIPSRRPTRRPGASHIQPSNQRTDLTPHGLQVPGPEKNSYQHIKSKDHARKKRPRSSS.

An N-terminal signal peptide occupies residues 1–19 (MRGTLATALLLVISSRVAT). The short motif at 48 to 69 (RFLRGSRKQRDDLAPTAADENR) is the RxLR-dEER element. N-linked (GlcNAc...) asparagine glycosylation occurs at Asn68. Disordered regions lie at residues 110–188 (RLSL…ALKS) and 398–457 (RQTI…RSSS). The span at 135 to 152 (SASTSTTSDIATSSSRTS) shows a compositional bias: low complexity. 2 stretches are compositionally biased toward polar residues: residues 153–163 (NQRTPKTQASL) and 176–187 (SKNQFKKSTALK). A compositionally biased stretch (basic residues) spans 442–457 (IKSKDHARKKRPRSSS).

This sequence belongs to the RxLR effector family.

It is found in the secreted. The protein resides in the host nucleus. Secreted effector that completely suppresses the host cell death induced by cell death-inducing proteins. The sequence is that of Secreted RxLR effector protein 8 from Plasmopara viticola (Downy mildew of grapevine).